The sequence spans 320 residues: Tryptophan--tRNA ligase (320 aa).

ATP-binding positions include 8 to 10 (QPT) and 16 to 17 (GN). The 'HIGH' region signature appears at 9-17 (PTGRPHWGN). Aspartate 131 is a binding site for L-tryptophan. Residues 143-145 (GVD), valine 182, and 189-193 (KMSKS) each bind ATP. A 'KMSKS' region motif is present at residues 189 to 193 (KMSKS).

Belongs to the class-I aminoacyl-tRNA synthetase family. Homodimer.

The protein localises to the cytoplasm. It catalyses the reaction tRNA(Trp) + L-tryptophan + ATP = L-tryptophyl-tRNA(Trp) + AMP + diphosphate + H(+). In terms of biological role, catalyzes the attachment of tryptophan to tRNA(Trp). The protein is Tryptophan--tRNA ligase of Rhodopirellula baltica (strain DSM 10527 / NCIMB 13988 / SH1).